Here is a 497-residue protein sequence, read N- to C-terminus: MFISRRCRIKGFTLKNLLWFRSSSTRFVSTESPDASAITKPDGIFNYSLLENRTYIRIRGPDTVKFLNGLVTSKLLPHFIKKNLTTVEENEVPTEEGTTKVDPIIPVPEFDARLGNWGLYNEKGIQGPYISRFGLYSAFLNGKGKLITDTIIYPTPVTVSEQISNYPEYLLELHGNVVDKILHVLQTHKLANKIKFEKIDHSSLKTWDVEVQFPNLPKDIENPWFDNLLDPMALPKNSIDANNFAVNVLNSLFNSDPRILGIYVERRTESMSRHYSTFPQSFRVVTSEQVDDLSKLFNFNVFDFPFQVNKKASVQVREIRFQKGLIDSTEDYISETLLPLELNFDFFPNTISTNKGCYVGQELTARTYATGILRKRLVPVKLDNYQLLDTDPERKYAEFHIDNVVEKSLAENEPTLNPFTNKPPERTKRKQRPAGLLISNEGLYGVALLRTEHFSAAFSSDEPVEFYITTTKGENIKITPQKPFWFSDWKNNNGPHK.

A mitochondrion-targeting transit peptide spans 1–27; that stretch reads MFISRRCRIKGFTLKNLLWFRSSSTRF. A disordered region spans residues 414 to 433; sequence PTLNPFTNKPPERTKRKQRP.

It belongs to the GcvT family. CAF17/IBA57 subfamily. Interacts with CCR4, ISA1 and ISA2.

The protein resides in the mitochondrion matrix. In terms of biological role, required for lysine and glutamate prototrophy and mitochondrial genome maintenance. Has a role in the maturation of mitochondrial aconitase-type and radical-SAM Fe/S proteins biotin synthase and lipoic acid synthase. The protein is Iron-sulfur cluster assembly factor IBA57, mitochondrial of Saccharomyces cerevisiae (strain ATCC 204508 / S288c) (Baker's yeast).